The chain runs to 139 residues: Nucleoside diphosphate kinase (139 aa).

ATP contacts are provided by Lys10, Phe58, Arg86, Thr92, Arg104, and Asn114. The active-site Pros-phosphohistidine intermediate is His117.

Belongs to the NDK family. In terms of assembly, homotetramer. Requires Mg(2+) as cofactor.

The protein localises to the cytoplasm. It catalyses the reaction a 2'-deoxyribonucleoside 5'-diphosphate + ATP = a 2'-deoxyribonucleoside 5'-triphosphate + ADP. The enzyme catalyses a ribonucleoside 5'-diphosphate + ATP = a ribonucleoside 5'-triphosphate + ADP. Major role in the synthesis of nucleoside triphosphates other than ATP. The ATP gamma phosphate is transferred to the NDP beta phosphate via a ping-pong mechanism, using a phosphorylated active-site intermediate. The chain is Nucleoside diphosphate kinase from Mycolicibacterium smegmatis (strain ATCC 700084 / mc(2)155) (Mycobacterium smegmatis).